Consider the following 237-residue polypeptide: Thrombin-like enzyme agkihpin-2 (237 aa).

Met1 is a propeptide. The region spanning 2-228 (ILGDDECNIN…HLDWIENIIA (227 aa)) is the Peptidase S1 domain. Cysteines 27 and 43 form a disulfide. His42 serves as the catalytic Charge relay system. A glycan (N-linked (GlcNAc...) asparagine) is linked at Asn80. Residue Asp87 is the Charge relay system of the active site. Disulfide bonds link Cys119–Cys189, Cys151–Cys168, and Cys179–Cys204. Ser183 (charge relay system) is an active-site residue.

The protein belongs to the peptidase S1 family. Snake venom subfamily. Expressed by the venom gland (at protein level). Expressed by the venom gland.

The protein localises to the secreted. With respect to regulation, the hydrolysis of TAMe (tosyl-arginine methyl ester) substrate is activated by Ca(2+), Fe(3+), Mg(2+) and Zn(2+), and inhibited by EDTA, PMSF and DTT. In terms of biological role, thrombin-like enzyme that shows fibrinogenolytic activity against bovine fibrinogen alpha and beta chains, but not gamma chain. Hydrolyzes fibrin. Enhances ADP-induced human platelet aggregation. Has arginine esterase activity for TAMe (tosyl-arginine methyl ester) substrate. Reduces thrombin-induced thrombosis. Does not have hemorrhagic activity. Reduces the motility of human liver cancer HepG2 cells in a wound-healing assay. This is Thrombin-like enzyme agkihpin-2 from Gloydius halys (Chinese water mocassin).